Here is a 94-residue protein sequence, read N- to C-terminus: Large ribosomal subunit protein bL28 (94 aa).

Residues Met1 to Ser21 are disordered. The span at Gly11–His20 shows a compositional bias: polar residues.

The protein belongs to the bacterial ribosomal protein bL28 family.

This Leptospira interrogans serogroup Icterohaemorrhagiae serovar copenhageni (strain Fiocruz L1-130) protein is Large ribosomal subunit protein bL28.